Consider the following 271-residue polypeptide: Ribosomal RNA small subunit methyltransferase A (271 aa).

S-adenosyl-L-methionine is bound by residues histidine 11, leucine 13, glycine 38, glutamate 58, aspartate 86, and asparagine 101.

The protein belongs to the class I-like SAM-binding methyltransferase superfamily. rRNA adenine N(6)-methyltransferase family. RsmA subfamily.

The protein resides in the cytoplasm. It carries out the reaction adenosine(1518)/adenosine(1519) in 16S rRNA + 4 S-adenosyl-L-methionine = N(6)-dimethyladenosine(1518)/N(6)-dimethyladenosine(1519) in 16S rRNA + 4 S-adenosyl-L-homocysteine + 4 H(+). Functionally, specifically dimethylates two adjacent adenosines (A1518 and A1519) in the loop of a conserved hairpin near the 3'-end of 16S rRNA in the 30S particle. May play a critical role in biogenesis of 30S subunits. This is Ribosomal RNA small subunit methyltransferase A from Helicobacter pylori (strain P12).